Consider the following 748-residue polypeptide: Acyl-coenzyme A oxidase (748 aa).

The protein belongs to the acyl-CoA oxidase family. In terms of assembly, homooctamer. It depends on FAD as a cofactor.

The protein resides in the peroxisome. It catalyses the reaction a 2,3-saturated acyl-CoA + O2 = a (2E)-enoyl-CoA + H2O2. It participates in lipid metabolism; peroxisomal fatty acid beta-oxidation. This Saccharomyces cerevisiae (strain ATCC 204508 / S288c) (Baker's yeast) protein is Acyl-coenzyme A oxidase (POX1).